A 469-amino-acid chain; its full sequence is Argininosuccinate lyase (469 aa).

Belongs to the lyase 1 family. Argininosuccinate lyase subfamily.

It is found in the cytoplasm. It carries out the reaction 2-(N(omega)-L-arginino)succinate = fumarate + L-arginine. The protein operates within amino-acid biosynthesis; L-arginine biosynthesis; L-arginine from L-ornithine and carbamoyl phosphate: step 3/3. The polypeptide is Argininosuccinate lyase (Burkholderia orbicola (strain MC0-3)).